A 198-amino-acid chain; its full sequence is Fe/S biogenesis protein NfuA (198 aa).

The [4Fe-4S] cluster site is built by cysteine 155 and cysteine 158.

It belongs to the NfuA family. As to quaternary structure, homodimer. It depends on [4Fe-4S] cluster as a cofactor.

Its function is as follows. Involved in iron-sulfur cluster biogenesis. Binds a 4Fe-4S cluster, can transfer this cluster to apoproteins, and thereby intervenes in the maturation of Fe/S proteins. Could also act as a scaffold/chaperone for damaged Fe/S proteins. The sequence is that of Fe/S biogenesis protein NfuA from Haemophilus influenzae (strain 86-028NP).